We begin with the raw amino-acid sequence, 938 residues long: Chaperone protein ClpD1, chloroplastic (938 aa).

Residues 1 to 83 (MEVCCCSTSS…FERFTERAVK (83 aa)) constitute a chloroplast transit peptide. Repeat stretches follow at residues 84 to 145 (AVVL…TPGA) and 159 to 224 (FSGS…LQAE). Positions 84–224 (AVVLSQREAK…SVALTRLQAE (141 aa)) constitute a Clp R domain. Residues 234-255 (GASSFKVPKKSPAGAGRSAFSK) form a disordered region. An i region spans residues 266–519 (LDQFCLDLTT…RMESFNRKKE (254 aa)). Residues 311–318 (GEAGVGKT) and 660–667 (GPTGVGKT) contribute to the ATP site. The interval 586-777 (VGTEEIARVA…LIVMTSNIGS (192 aa)) is II.

This sequence belongs to the ClpA/ClpB family. ClpD subfamily. In terms of tissue distribution, expressed in stems, culms and leaves.

It localises to the plastid. The protein localises to the chloroplast. Molecular chaperone that may function in heat stress response. May interact with a ClpP-like protease involved in degradation of denatured proteins in the chloroplast. Chaperone involved in response to abiotic stresses. Plays a positive role during dehydration and salt stress. This is Chaperone protein ClpD1, chloroplastic from Oryza sativa subsp. japonica (Rice).